The sequence spans 488 residues: MAEATDVVLVGGGIMSATLGVLLKELEPSWEITLIERLEDVALESSNAWNNAGTGHSALCELNYAPLGANGIIDPARALNIAEQFHVSRQFWATLVAEGKLEDNSFINAVPHMSLVMNEDHCSYLQKRYDAFKTQKLFENMEFSTDRNKISDWAPLMMRGRDENQPVAANYSAEGTDVDFGRLTRQMVKYLQGKGVKTEFNRHVEDIKRESDGAWVLKTADTRNPDGQLTLRTRFLFLGAGGGALTLLQKSGIPEGKGYGGFPVSGLFFRNSTPETAEQHNAKVYGQASVGAPPMSVPHLDTRNVDGKRHLMFGPYAGFRSNFLKQGSLMDLPLSIHMDNLYPMLCAGWANMPLTKYLLGELRKTKEERFASLLEYYPEANPDDWELITAGQRVQIIKKDSEKGGVLQFGTEIVAHADGSLAALLGASPGASTAVPLMIRLMHQCFPERAPSWEGRLKELVPGYGIKLNENPERADEIIAYTAKVLDI.

Belongs to the MQO family. FAD serves as cofactor.

The enzyme catalyses (S)-malate + a quinone = a quinol + oxaloacetate. It functions in the pathway carbohydrate metabolism; tricarboxylic acid cycle; oxaloacetate from (S)-malate (quinone route): step 1/1. This chain is Probable malate:quinone oxidoreductase, found in Neisseria meningitidis serogroup C / serotype 2a (strain ATCC 700532 / DSM 15464 / FAM18).